The chain runs to 186 residues: A-type ATP synthase subunit E (186 aa).

This sequence belongs to the V-ATPase E subunit family. As to quaternary structure, has multiple subunits with at least A(3), B(3), C, D, E, F, H, I and proteolipid K(x).

The protein resides in the cell membrane. Functionally, component of the A-type ATP synthase that produces ATP from ADP in the presence of a proton gradient across the membrane. The chain is A-type ATP synthase subunit E from Methanocella arvoryzae (strain DSM 22066 / NBRC 105507 / MRE50).